The primary structure comprises 308 residues: Malate dehydrogenase (308 aa).

Residues 6–11 (GSGRVG) and Asp31 contribute to the NAD(+) site. The substrate site is built by Arg80 and Arg86. NAD(+) contacts are provided by residues Asn93 and 116 to 118 (TTN). Residues Asn118 and Arg149 each coordinate substrate. The Proton acceptor role is filled by His173.

The protein belongs to the LDH/MDH superfamily.

The catalysed reaction is (S)-malate + NAD(+) = oxaloacetate + NADH + H(+). Its function is as follows. Catalyzes the reversible oxidation of malate to oxaloacetate. In Thermoproteus tenax (strain ATCC 35583 / DSM 2078 / JCM 9277 / NBRC 100435 / Kra 1), this protein is Malate dehydrogenase (mdh).